Reading from the N-terminus, the 87-residue chain is Mitochondrial import inner membrane translocase subunit TIM9 (87 aa).

Residues 35–59 carry the Twin CX3C motif motif; that stretch reads CFSDCVNDFTSAKLTSKEQNCIMRC. 2 cysteine pairs are disulfide-bonded: C35-C59 and C39-C55.

It belongs to the small Tim family. In terms of assembly, heterohexamer; composed of 3 copies of TIM9 and 3 copies of TIM10, named soluble 70 kDa complex. Associates with the TIM22 complex, whose core is composed of TIM22 and TIM54. Interacts with the transmembrane regions of multi-pass transmembrane proteins in transit.

It localises to the mitochondrion inner membrane. In terms of biological role, mitochondrial intermembrane chaperone that participates in the import and insertion of multi-pass transmembrane proteins into the mitochondrial inner membrane. Also required for the transfer of beta-barrel precursors from the TOM complex to the sorting and assembly machinery (SAM complex) of the outer membrane. Acts as a chaperone-like protein that protects the hydrophobic precursors from aggregation and guide them through the mitochondrial intermembrane space. The sequence is that of Mitochondrial import inner membrane translocase subunit TIM9 (TIM9) from Kluyveromyces lactis (strain ATCC 8585 / CBS 2359 / DSM 70799 / NBRC 1267 / NRRL Y-1140 / WM37) (Yeast).